Consider the following 106-residue polypeptide: MTSATQFDNVSVVKRANVYFDGKCVSHTVLFPDGTRKTLGVILPCALNFGTDAPELMEVQAGKCRVKLDGSSEWQTYGAGESFSVPGKSRFDIEVLETLDYVCSYL.

This sequence belongs to the nucleoside phosphorylase PpnP family.

The enzyme catalyses a purine D-ribonucleoside + phosphate = a purine nucleobase + alpha-D-ribose 1-phosphate. It carries out the reaction adenosine + phosphate = alpha-D-ribose 1-phosphate + adenine. It catalyses the reaction cytidine + phosphate = cytosine + alpha-D-ribose 1-phosphate. The catalysed reaction is guanosine + phosphate = alpha-D-ribose 1-phosphate + guanine. The enzyme catalyses inosine + phosphate = alpha-D-ribose 1-phosphate + hypoxanthine. It carries out the reaction thymidine + phosphate = 2-deoxy-alpha-D-ribose 1-phosphate + thymine. It catalyses the reaction uridine + phosphate = alpha-D-ribose 1-phosphate + uracil. The catalysed reaction is xanthosine + phosphate = alpha-D-ribose 1-phosphate + xanthine. Catalyzes the phosphorolysis of diverse nucleosides, yielding D-ribose 1-phosphate and the respective free bases. Can use uridine, adenosine, guanosine, cytidine, thymidine, inosine and xanthosine as substrates. Also catalyzes the reverse reactions. The polypeptide is Pyrimidine/purine nucleoside phosphorylase (Burkholderia cenocepacia (strain ATCC BAA-245 / DSM 16553 / LMG 16656 / NCTC 13227 / J2315 / CF5610) (Burkholderia cepacia (strain J2315))).